The sequence spans 442 residues: tRNA modification GTPase MnmE (442 aa).

Residues R23, E82, and K121 each contribute to the (6S)-5-formyl-5,6,7,8-tetrahydrofolate site. The TrmE-type G domain maps to 215 to 364; the sequence is GTSLILAGKP…VKQALIQWMQ (150 aa). A K(+)-binding site is contributed by N225. Residues 225–230, 244–250, 269–272, and 325–328 contribute to the GTP site; these read NVGKSS, THIPGTT, DTAG, and NKAD. Mg(2+) is bound at residue S229. Positions 244, 246, and 249 each coordinate K(+). Position 250 (T250) interacts with Mg(2+). Position 442 (K442) interacts with (6S)-5-formyl-5,6,7,8-tetrahydrofolate.

It belongs to the TRAFAC class TrmE-Era-EngA-EngB-Septin-like GTPase superfamily. TrmE GTPase family. As to quaternary structure, homodimer. Heterotetramer of two MnmE and two MnmG subunits. The cofactor is K(+).

The protein localises to the cytoplasm. Its function is as follows. Exhibits a very high intrinsic GTPase hydrolysis rate. Involved in the addition of a carboxymethylaminomethyl (cmnm) group at the wobble position (U34) of certain tRNAs, forming tRNA-cmnm(5)s(2)U34. The sequence is that of tRNA modification GTPase MnmE from Chlamydia pneumoniae (Chlamydophila pneumoniae).